The sequence spans 293 residues: Ribonuclease Z (293 aa).

Zn(2+) contacts are provided by His60, His62, Asp64, His65, His132, Asp200, and His256. The Proton acceptor role is filled by Asp64.

It belongs to the RNase Z family. As to quaternary structure, homodimer. The cofactor is Zn(2+).

It catalyses the reaction Endonucleolytic cleavage of RNA, removing extra 3' nucleotides from tRNA precursor, generating 3' termini of tRNAs. A 3'-hydroxy group is left at the tRNA terminus and a 5'-phosphoryl group is left at the trailer molecule.. In terms of biological role, zinc phosphodiesterase, which displays some tRNA 3'-processing endonuclease activity. Probably involved in tRNA maturation, by removing a 3'-trailer from precursor tRNA. This is Ribonuclease Z from Sulfurisphaera tokodaii (strain DSM 16993 / JCM 10545 / NBRC 100140 / 7) (Sulfolobus tokodaii).